Here is a 262-residue protein sequence, read N- to C-terminus: Aminoglycoside (3'') (9) adenylyltransferase (262 aa).

It carries out the reaction streptomycin + ATP = 3''-O-adenylylstreptomycin + diphosphate. The catalysed reaction is spectinomycin + ATP = 9-O-adenylylspectinomycin + diphosphate. Its function is as follows. Mediates bacterial resistance to the antibiotics streptomycin and spectinomycin. This chain is Aminoglycoside (3'') (9) adenylyltransferase, found in Shigella flexneri.